An 86-amino-acid chain; its full sequence is uncharacterized protein (86 aa).

The next 2 helical transmembrane spans lie at 21-43 (VFWVGLVVYYGFVALCWIGEATA) and 53-75 (FWYASFLGTFLIPLFMSIIYFYF).

Its subcellular location is the cell membrane. This is an uncharacterized protein from Archaeoglobus fulgidus (strain ATCC 49558 / DSM 4304 / JCM 9628 / NBRC 100126 / VC-16).